A 170-amino-acid polypeptide reads, in one-letter code: uncharacterized protein (170 aa).

Topologically, residues 1-15 (MFLTSPFESCIVLSS) are cytoplasmic. A helical membrane pass occupies residues 16-36 (LIAGLLFSLSTGFVGILGVFA). Over 37–76 (SLFETELSVSPKRLSLSSLSWPKTFWALLSSVEGVSWESS) the chain is Extracellular. The chain crosses the membrane as a helical span at residues 77–97 (LFACIVGCCFAVTVIASLSAS). The Cytoplasmic segment spans residues 98–119 (RVFGTVASSFRDSSCCCDSSPA). Residues 120–140 (VSVLATPATAALALLSLLLSL) traverse the membrane as a helical segment. Residues 141-170 (PCWSTSTEAFTVDPSPSVFSMLANRITIGL) are Extracellular-facing.

Its subcellular location is the membrane. This is an uncharacterized protein from Saccharomyces cerevisiae (strain ATCC 204508 / S288c) (Baker's yeast).